The primary structure comprises 181 residues: Protein AC41 (181 aa).

Its function is as follows. Plays a role in late gene expression. The protein is Protein AC41 (AC41) of Autographa californica nuclear polyhedrosis virus (AcMNPV).